The primary structure comprises 584 residues: Arginine--tRNA ligase (584 aa).

Positions 127–137 match the 'HIGH' region motif; sequence PNTNKPLHIGH.

It belongs to the class-I aminoacyl-tRNA synthetase family. Monomer.

It is found in the cytoplasm. The catalysed reaction is tRNA(Arg) + L-arginine + ATP = L-arginyl-tRNA(Arg) + AMP + diphosphate. The protein is Arginine--tRNA ligase of Borrelia hermsii (strain HS1 / DAH).